The primary structure comprises 266 residues: Ribonuclease 3 (266 aa).

Residues 34–158 (IERCQEILGY…VIAALYIDGG (125 aa)) enclose the RNase III domain. Position 72 (glutamate 72) interacts with Mg(2+). Residue aspartate 76 is part of the active site. Residues aspartate 144 and glutamate 147 each contribute to the Mg(2+) site. The active site involves glutamate 147. Positions 185 to 254 (NHKSVLQQFA…AANALAELHN (70 aa)) constitute a DRBM domain.

The protein belongs to the ribonuclease III family. In terms of assembly, homodimer. Requires Mg(2+) as cofactor.

The protein localises to the cytoplasm. It carries out the reaction Endonucleolytic cleavage to 5'-phosphomonoester.. Functionally, digests double-stranded RNA. Involved in the processing of primary rRNA transcript to yield the immediate precursors to the large and small rRNAs (23S and 16S). Processes some mRNAs, and tRNAs when they are encoded in the rRNA operon. Processes pre-crRNA and tracrRNA of type II CRISPR loci if present in the organism. The polypeptide is Ribonuclease 3 (Rhodopirellula baltica (strain DSM 10527 / NCIMB 13988 / SH1)).